The chain runs to 151 residues: Acidic phospholipase A2 5 (151 aa).

The N-terminal stretch at 1 to 27 (MYPAHLLVLLAVCVSLLGAASIPARPL) is a signal peptide. 7 disulfides stabilise this stretch: Cys-38/Cys-104, Cys-54/Cys-151, Cys-56/Cys-72, Cys-71/Cys-132, Cys-78/Cys-125, Cys-88/Cys-118, and Cys-111/Cys-123. Ca(2+)-binding residues include Tyr-55, Gly-57, and Gly-59. Residue His-75 is part of the active site. Ca(2+) is bound at residue Asp-76. Asp-126 is a catalytic residue.

Belongs to the phospholipase A2 family. Group I subfamily. D49 sub-subfamily. The cofactor is Ca(2+). Expressed by the venom gland.

It is found in the secreted. It carries out the reaction a 1,2-diacyl-sn-glycero-3-phosphocholine + H2O = a 1-acyl-sn-glycero-3-phosphocholine + a fatty acid + H(+). Its function is as follows. PLA2 catalyzes the calcium-dependent hydrolysis of the 2-acyl groups in 3-sn-phosphoglycerides. The polypeptide is Acidic phospholipase A2 5 (Tropidechis carinatus (Australian rough-scaled snake)).